We begin with the raw amino-acid sequence, 377 residues long: Dihydroorotate dehydrogenase (quinone) (377 aa).

FMN contacts are provided by residues 82 to 86 and Thr106; that span reads AGFDK. Lys86 contacts substrate. 131-135 provides a ligand contact to substrate; the sequence is NRMGF. The FMN site is built by Asn159 and Asn192. Asn192 is a substrate binding site. The active-site Nucleophile is the Ser195. Asn197 is a substrate binding site. Residues Lys228 and Thr256 each contribute to the FMN site. 257 to 258 serves as a coordination point for substrate; sequence NT. Residues Gly282, Gly311, and 332 to 333 contribute to the FMN site; that span reads YT.

This sequence belongs to the dihydroorotate dehydrogenase family. Type 2 subfamily. As to quaternary structure, monomer. It depends on FMN as a cofactor.

It localises to the cell membrane. The catalysed reaction is (S)-dihydroorotate + a quinone = orotate + a quinol. It functions in the pathway pyrimidine metabolism; UMP biosynthesis via de novo pathway; orotate from (S)-dihydroorotate (quinone route): step 1/1. Catalyzes the conversion of dihydroorotate to orotate with quinone as electron acceptor. In Corynebacterium efficiens (strain DSM 44549 / YS-314 / AJ 12310 / JCM 11189 / NBRC 100395), this protein is Dihydroorotate dehydrogenase (quinone).